A 407-amino-acid polypeptide reads, in one-letter code: uncharacterized protein (407 aa).

At 1–290 (MPLNIIGTAL…SNSLRRVISN (290 aa)) the chain is on the lumenal side. Residues aspartate 114, lysine 236, and serine 281 each contribute to the NADP(+) site. Catalysis depends on lysine 236, which acts as the Lowers pKa of active site Tyr. A helical transmembrane segment spans residues 291–311 (GSVVLLIILYCILLYPILWLF). The Cytoplasmic portion of the chain corresponds to 312 to 407 (TKSGRRGDQS…KSQNKSRKDD (96 aa)). The stretch at 361 to 390 (ELQKKLFDNTERDILQLEKKVAAKRNANKT) forms a coiled coil. The disordered stretch occupies residues 383–407 (AKRNANKTGNQNSKKKSQNKSRKDD). The span at 395–407 (SKKKSQNKSRKDD) shows a compositional bias: basic residues.

The protein belongs to the short-chain dehydrogenases/reductases (SDR) family.

The protein localises to the endoplasmic reticulum membrane. Its function is as follows. May be involved in lipid metabolism. This is an uncharacterized protein from Saccharomyces cerevisiae (strain ATCC 204508 / S288c) (Baker's yeast).